The following is a 560-amino-acid chain: Dihydroxy-acid dehydratase (560 aa).

Cysteine 50 is a binding site for [2Fe-2S] cluster. Aspartate 82 lines the Mg(2+) pocket. [2Fe-2S] cluster is bound at residue cysteine 123. Residues aspartate 124 and lysine 125 each contribute to the Mg(2+) site. An N6-carboxylysine modification is found at lysine 125. [2Fe-2S] cluster is bound at residue cysteine 195. Residue glutamate 447 coordinates Mg(2+). Serine 473 serves as the catalytic Proton acceptor.

Belongs to the IlvD/Edd family. In terms of assembly, homodimer. [2Fe-2S] cluster is required as a cofactor. It depends on Mg(2+) as a cofactor.

The enzyme catalyses (2R)-2,3-dihydroxy-3-methylbutanoate = 3-methyl-2-oxobutanoate + H2O. The catalysed reaction is (2R,3R)-2,3-dihydroxy-3-methylpentanoate = (S)-3-methyl-2-oxopentanoate + H2O. Its pathway is amino-acid biosynthesis; L-isoleucine biosynthesis; L-isoleucine from 2-oxobutanoate: step 3/4. The protein operates within amino-acid biosynthesis; L-valine biosynthesis; L-valine from pyruvate: step 3/4. Functions in the biosynthesis of branched-chain amino acids. Catalyzes the dehydration of (2R,3R)-2,3-dihydroxy-3-methylpentanoate (2,3-dihydroxy-3-methylvalerate) into 2-oxo-3-methylpentanoate (2-oxo-3-methylvalerate) and of (2R)-2,3-dihydroxy-3-methylbutanoate (2,3-dihydroxyisovalerate) into 2-oxo-3-methylbutanoate (2-oxoisovalerate), the penultimate precursor to L-isoleucine and L-valine, respectively. This is Dihydroxy-acid dehydratase from Methylibium petroleiphilum (strain ATCC BAA-1232 / LMG 22953 / PM1).